The chain runs to 891 residues: Aconitate hydratase A (891 aa).

Residues cysteine 435, cysteine 501, and cysteine 504 each contribute to the [4Fe-4S] cluster site.

The protein belongs to the aconitase/IPM isomerase family. As to quaternary structure, monomer. It depends on [4Fe-4S] cluster as a cofactor.

The enzyme catalyses citrate = D-threo-isocitrate. It functions in the pathway carbohydrate metabolism; tricarboxylic acid cycle; isocitrate from oxaloacetate: step 2/2. In terms of biological role, catalyzes the reversible isomerization of citrate to isocitrate via cis-aconitate. The apo form of AcnA functions as a RNA-binding regulatory protein which plays a role as a maintenance or survival enzyme during nutritional or oxidative stress. During oxidative stress inactive AcnA apo-enzyme without iron sulfur clusters binds the acnA mRNA 3' UTRs (untranslated regions), stabilizes acnA mRNA and increases AcnA synthesis, thus mediating a post-transcriptional positive autoregulatory switch. AcnA also enhances the stability of the sodA transcript. The protein is Aconitate hydratase A of Escherichia coli (strain K12).